We begin with the raw amino-acid sequence, 1761 residues long: 6-methylsalicylic acid synthase AOL_s00215g283 (1761 aa).

The Ketosynthase family 3 (KS3) domain occupies 18 to 443 (QDDIAIIGMA…GTVAHAVIEQ (426 aa)). Catalysis depends on for beta-ketoacyl synthase activity residues Cys190, His325, and His367. The segment at 554 to 870 (VWVFSGHGAH…ALGKLHCHGA (317 aa)) is malonyl-CoA:ACP transacylase (MAT) domain. Residue Ser641 is the For malonyltransferase activity of the active site. The segment at 918–1038 (HVLLGAKHQV…GHVANNEWSK (121 aa)) is N-terminal hotdog fold. A dehydratase (DH) domain region spans residues 918-1187 (HVLLGAKHQV…NGMRFSAVEG (270 aa)). The PKS/mFAS DH domain maps to 918-1191 (HVLLGAKHQV…FSAVEGTPGA (274 aa)). The active-site Proton acceptor; for dehydratase activity is the His950. The C-terminal hotdog fold stretch occupies residues 1050-1191 (LPSVKPSFAT…FSAVEGTPGA (142 aa)). Residue Asp1113 is the Proton donor; for dehydratase activity of the active site. Positions 1399–1587 (GTYLITGGLG…IVSFLWTSWN (189 aa)) are ketoreductase (KR) domain. Residues 1654–1680 (PRKRAESSGTEAVSKGEVSEKAPVPKS) are disordered. Residues 1686-1761 (EYLQNAISEC…HLVKWFEEKI (76 aa)) enclose the Carrier domain. Ser1721 bears the O-(pantetheine 4'-phosphoryl)serine mark.

The enzyme catalyses 3 malonyl-CoA + acetyl-CoA + NADPH + 3 H(+) = 6-methylsalicylate + 3 CO2 + NADP(+) + 4 CoA + H2O. It functions in the pathway secondary metabolite biosynthesis; terpenoid biosynthesis. Its function is as follows. 6-methylsalicylic acid synthase; part of the gene cluster that mediates the biosynthesis of sesquiterpenyl epoxy-cyclohexenoids (SECs) such as anthrobotrisins and arthrosporols, metabolites that possess a novel hybrid carbon skeleton consisting of a polyketide-derived epoxycyclohexenol combined with a terpenoid-derived monocyclic sesquiterpenol substructure (PKS-PTS hybrid). The SEC pathway plays an important role for fungal soil colonization via decreasing fungal nematode-capturing ability. Within the pathway, the polyketide synthase (PKS) AOL_s00215g283 catalyzes the biosynthesis of 6-methylsalicylic acid (6-MSA) via condensation of 1 acetate and 3 malonate units. AOL_s00215g283 performs a series of programmed reactions including Claisen condensation, dehydration, reduction, and cyclization to yield 6-MSA. The pathway begins with the biosynthesis of 6-methylsalicylic acid (6-MSA), the first precursor of the polyketide-derived epoxycyclohexenol in arthrosporols, by the polyketide synthase (PKS) AOL_s00215g283. The 6-methylsalicylic acid decarboxylase AOL_s00215g281 then catalyzes the decarboxylation of 6-methylsalicylic acid to yield m-cresol. The cytochrome P450 monooxygenase AOL_s00215g282 further oxidizes m-cresol to yield toluquinol. With the assistance of the oxidoreductase AOL_s00215g277, the polyprenyl transferase AOL_s00215g276 catalyzes the farnesylation of toluquinol to produce farnesyl hydroquinone, the hybrid precursor for biosynthesis of SECs. Farnesyl hydroquinone undergoes epoxidation and then subsequent dehydrogenation to form farnesyl epoxy-quinone, the first and simplest SEC. The cytochrome P450 monooxygenase AOL_s00215g278 and the FAD-dependent monooxygenase AOL_s00215g279 might be involved in the oxygenation of the phenol moiety, most likely in the epoxy formation. The cytochrome P450 monooxygenases AOL_s00215g274 and AOL_s00215g280 are involved in specific regional ketone reductions at respectively C-4 and C-1 of farnesyl epoxy-quinone PubMed:33823587. This Arthrobotrys oligospora (strain ATCC 24927 / CBS 115.81 / DSM 1491) (Nematode-trapping fungus) protein is 6-methylsalicylic acid synthase AOL_s00215g283.